Reading from the N-terminus, the 509-residue chain is Histidine--tRNA ligase, cytoplasmic (509 aa).

Alanine 2 carries the N-acetylalanine modification. One can recognise a WHEP-TRS domain in the interval 3 to 59; that stretch reads DRAALEDLVRVQGERVRGLKQQKASAEQIEEEVAKLLKLKAQLGPDEGKPKFVLKTP. Serine 66 is modified (phosphoserine). Residues 130 to 132, arginine 157, glutamine 173, aspartate 177, arginine 326, and 330 to 331 contribute to the L-histidine site; these read DLT and YY. Position 356 is a phosphoserine (serine 356).

Belongs to the class-II aminoacyl-tRNA synthetase family. In terms of assembly, homodimer.

It localises to the cytoplasm. The enzyme catalyses tRNA(His) + L-histidine + ATP = L-histidyl-tRNA(His) + AMP + diphosphate + H(+). Catalyzes the ATP-dependent ligation of histidine to the 3'-end of its cognate tRNA, via the formation of an aminoacyl-adenylate intermediate (His-AMP). Plays a role in axon guidance. This Bos taurus (Bovine) protein is Histidine--tRNA ligase, cytoplasmic (HARS1).